The sequence spans 171 residues: Co-chaperone protein HscB homolog (171 aa).

Residues 2 to 74 form the J domain; sequence NHFELFGLPN…VSRAEYILSE (73 aa).

It belongs to the HscB family. As to quaternary structure, interacts with HscA and stimulates its ATPase activity.

Functionally, co-chaperone involved in the maturation of iron-sulfur cluster-containing proteins. Seems to help targeting proteins to be folded toward HscA. This is Co-chaperone protein HscB homolog from Aliivibrio fischeri (strain ATCC 700601 / ES114) (Vibrio fischeri).